Reading from the N-terminus, the 155-residue chain is SsrA-binding protein (155 aa).

It belongs to the SmpB family.

The protein localises to the cytoplasm. Required for rescue of stalled ribosomes mediated by trans-translation. Binds to transfer-messenger RNA (tmRNA), required for stable association of tmRNA with ribosomes. tmRNA and SmpB together mimic tRNA shape, replacing the anticodon stem-loop with SmpB. tmRNA is encoded by the ssrA gene; the 2 termini fold to resemble tRNA(Ala) and it encodes a 'tag peptide', a short internal open reading frame. During trans-translation Ala-aminoacylated tmRNA acts like a tRNA, entering the A-site of stalled ribosomes, displacing the stalled mRNA. The ribosome then switches to translate the ORF on the tmRNA; the nascent peptide is terminated with the 'tag peptide' encoded by the tmRNA and targeted for degradation. The ribosome is freed to recommence translation, which seems to be the essential function of trans-translation. This Streptococcus sanguinis (strain SK36) protein is SsrA-binding protein.